The chain runs to 578 residues: MGCGLNKLEKRDEKRPGNIYSTLKRPQVETKIDVSYEYRFLEFTTLSAAELPGSSAVRLASLRDLPAQLLELYQQGFSLAALHPFVQPTHEREKTPLEHIFRAILIKKTDRSQKTDLHNEGYILELDCCSSLDHPTDQKLIPEFIKKIQEAASQGLKFVGVIPQYHSSVNSAGSSAPVSTANSTEDARDAKNARGDHASLENEKPGTGDVCSAPAGRNQSPEPSSGPRGEVPLAKQPSSPSGEGDGGELSPQGVSKTLDGPESNPLEVHEEPLSGKMEIFTLFNKPKSHQKCRQYYPVTIPLHVSKNGQTVSGLDANWLEHMSDHFRKGGMLVNAVFYLGIVNDSLHGLTDGVFIFEAVSTEDSKTIQGYDAIVVEQWTVLEGVEVQTDYVPLLNSLAAYGWQLTCVLPTPVVKTTSEGSVSTKQIVFLQRPCLPQKIKKKESKFQWRFSREEMHNRQMRKSKGKLSARDKQQAEENEKNLEDQSSKAGDMGNCVSGQQQEGGVSEEMKGPVQEDKGEQLSPGGLLCGVGVEGEAVQNGPASHSRALVGICTGHSNPGEDARDGDAEEVRELGTVEEN.

Residue G2 is the site of N-myristoyl glycine attachment. Residue C3 is the site of S-palmitoyl cysteine attachment. The span at 169-184 (VNSAGSSAPVSTANST) shows a compositional bias: polar residues. Disordered stretches follow at residues 169–271 (VNSA…VHEE), 449–525 (FSRE…PGGL), and 551–578 (CTGHSNPGEDARDGDAEEVRELGTVEEN). S183, S199, and S220 each carry phosphoserine. The segment covering 185 to 206 (EDARDAKNARGDHASLENEKPG) has biased composition (basic and acidic residues). A compositionally biased stretch (basic residues) spans 457–466 (RQMRKSKGKL). Residues 467–485 (SARDKQQAEENEKNLEDQS) show a composition bias toward basic and acidic residues. S505 bears the Phosphoserine mark. Composition is skewed to basic and acidic residues over residues 506–518 (EEMKGPVQEDKGE) and 557–578 (PGEDARDGDAEEVRELGTVEEN).

The protein belongs to the raftlin family. As to quaternary structure, interacts with TLR4; the interaction occurs in response to lipopolysaccharide stimulation. Interacts with CLTC; the interaction occurs in response to pathogens. Interacts with AP2A1 and AP2B1. As to expression, expressed in B-cells (at protein level). Expressed in dendritic cells and macrophages.

It localises to the cell membrane. The protein resides in the cytoplasm. The protein localises to the membrane raft. It is found in the endosome. Its subcellular location is the early endosome. Functionally, involved in protein trafficking via association with clathrin and AP2 complex. Upon bacterial lipopolysaccharide stimulation, mediates internalization of TLR4 to endosomes in dendritic cells and macrophages; and internalization of poly(I:C) to TLR3-positive endosomes in myeloid dendritic cells and epithelial cells; resulting in activation of TICAM1-mediated signaling and subsequent IFNB1 production. Involved in T-cell antigen receptor-mediated signaling by regulating tyrosine kinase LCK localization, T-cell dependent antibody production and cytokine secretion. May regulate B-cell antigen receptor-mediated signaling. May play a pivotal role in the formation and/or maintenance of lipid rafts. In Homo sapiens (Human), this protein is Raftlin (RFTN1).